The sequence spans 129 residues: D-ribose pyranase (129 aa).

The active-site Proton donor is His20. Residues Asp28, His96, and 118–120 (YAN) contribute to the substrate site.

The protein belongs to the RbsD / FucU family. RbsD subfamily. Homodecamer.

It is found in the cytoplasm. The catalysed reaction is beta-D-ribopyranose = beta-D-ribofuranose. The protein operates within carbohydrate metabolism; D-ribose degradation; D-ribose 5-phosphate from beta-D-ribopyranose: step 1/2. Its function is as follows. Catalyzes the interconversion of beta-pyran and beta-furan forms of D-ribose. The protein is D-ribose pyranase of Shouchella clausii (strain KSM-K16) (Alkalihalobacillus clausii).